We begin with the raw amino-acid sequence, 503 residues long: TGF-beta receptor type-1 (503 aa).

The first 33 residues, 1-33 (MEAAVAAPRPRLLLLVLAAAAAAAAALLPGATA), serve as a signal peptide directing secretion. At 34-126 (LQCFCHLCTK…SSPGLGPVEL (93 aa)) the chain is on the extracellular side. 5 disulfides stabilise this stretch: Cys-36–Cys-54, Cys-38–Cys-41, Cys-48–Cys-71, Cys-86–Cys-100, and Cys-101–Cys-106. Residue Asn-45 is glycosylated (N-linked (GlcNAc...) asparagine). The helical transmembrane segment at 127–147 (AAVIAGPVCFVCISLMLMVYI) threads the bilayer. The Cytoplasmic portion of the chain corresponds to 148-503 (CHNRTVIHHR…QLSQQEGIKM (356 aa)). Phosphoserine is present on Ser-165. Residues 175–204 (TTLKDLIYDMTTSGSGSGLPLLVQRTIART) enclose the GS domain. Thr-185 and Thr-186 each carry phosphothreonine; by TGFBR2. 3 positions are modified to phosphoserine; by TGFBR2: Ser-187, Ser-189, and Ser-191. Residues 193–194 (LP) carry the FKBP1A-binding motif. A Protein kinase domain is found at 205–495 (IVLQESIGKG…LRIKKTLSQL (291 aa)). Residues 211-219 (IGKGRFGEV) and Lys-232 each bind ATP. A Glycyl lysine isopeptide (Lys-Gly) (interchain with G-Cter in ubiquitin) cross-link involves residue Lys-268. The active-site Proton acceptor is Asp-333. Lys-391 is covalently cross-linked (Glycyl lysine isopeptide (Lys-Gly) (interchain with G-Cter in SUMO)).

The protein belongs to the protein kinase superfamily. TKL Ser/Thr protein kinase family. TGFB receptor subfamily. As to quaternary structure, homodimer; in the endoplasmic reticulum but also at the cell membrane. Heterohexamer; TGFB1, TGFB2 and TGFB3 homodimeric ligands assemble a functional receptor composed of two TGFBR1 and TGFBR2 heterodimers to form a ligand-receptor heterohexamer. The respective affinity of TGBRB1 and TGFBR2 for the ligands may modulate the kinetics of assembly of the receptor and may explain the different biological activities of TGFB1, TGFB2 and TGFB3. Component of a complex composed of TSC22D1 (via N-terminus), TGFBR1 and TGFBR2; the interaction between TSC22D1 and TGFBR1 is inhibited by SMAD7 and promoted by TGFB1. Interacts with CD109; inhibits TGF-beta receptor activation in keratinocytes. Interacts with RBPMS. Interacts (unphosphorylated) with FKBP1A; prevents TGFBR1 phosphorylation by TGFBR2 and stabilizes it in the inactive conformation. Interacts with SMAD2, SMAD3 and ZFYVE9; ZFYVE9 recruits SMAD2 and SMAD3 to the TGF-beta receptor. Interacts with TRAF6 and MAP3K7; induces MAP3K7 activation by TRAF6. Interacts with PARD6A; involved in TGF-beta induced epithelial to mesenchymal transition. Interacts with NEDD4L. Interacts with SMAD7, SMURF1 and SMURF2; SMAD7 recruits NEDD4L, SMURF1 and SMURF2 to the TGF-beta receptor. Interacts with USP15 and VPS39. Interacts with SDCBP (via C-terminus). Interacts with CAV1 and this interaction is impaired in the presence of SDCBP. Interacts with APPL1; interaction is TGF beta dependent; mediates trafficking of the TGFBR1 from the endosomes to the nucleus via microtubules in a TRAF6-dependent manner. Interacts with GPR50; this interaction promotes the constitutive activation of SMAD signaling pathway. The cofactor is Mg(2+). It depends on Mn(2+) as a cofactor. In terms of processing, phosphorylated at basal levels in the absence of ligand. Activated upon phosphorylation by TGFBR2, mainly in the GS domain. Phosphorylation in the GS domain abrogates FKBP1A-binding. Post-translationally, N-Glycosylated. Ubiquitinated; undergoes ubiquitination catalyzed by several E3 ubiquitin ligases including SMURF1, SMURF2 and NEDD4L2. Results in the proteasomal and/or lysosomal degradation of the receptor thereby negatively regulating its activity. Deubiquitinated by USP15, leading to stabilization of the protein and enhanced TGF-beta signal. Its ubiquitination and proteasome-mediated degradation is negatively regulated by SDCBP. Ubiquitinated by BFAR via'Lys-63'-linked ubiquitination at Lys-268, leading to TGF-beta signaling activation. In terms of tissue distribution, found in all tissues examined, most abundant in placenta and least abundant in brain and heart. Expressed in a variety of cancer cell lines.

The protein resides in the cell membrane. It is found in the cell junction. The protein localises to the tight junction. It localises to the cell surface. Its subcellular location is the membrane raft. The catalysed reaction is L-threonyl-[receptor-protein] + ATP = O-phospho-L-threonyl-[receptor-protein] + ADP + H(+). It catalyses the reaction L-seryl-[receptor-protein] + ATP = O-phospho-L-seryl-[receptor-protein] + ADP + H(+). With respect to regulation, kept in an inactive conformation by FKBP1A preventing receptor activation in absence of ligand. CD109 is another inhibitor of the receptor. Its function is as follows. Transmembrane serine/threonine kinase forming with the TGF-beta type II serine/threonine kinase receptor, TGFBR2, the non-promiscuous receptor for the TGF-beta cytokines TGFB1, TGFB2 and TGFB3. Transduces the TGFB1, TGFB2 and TGFB3 signal from the cell surface to the cytoplasm and is thus regulating a plethora of physiological and pathological processes including cell cycle arrest in epithelial and hematopoietic cells, control of mesenchymal cell proliferation and differentiation, wound healing, extracellular matrix production, immunosuppression and carcinogenesis. The formation of the receptor complex composed of 2 TGFBR1 and 2 TGFBR2 molecules symmetrically bound to the cytokine dimer results in the phosphorylation and the activation of TGFBR1 by the constitutively active TGFBR2. Activated TGFBR1 phosphorylates SMAD2 which dissociates from the receptor and interacts with SMAD4. The SMAD2-SMAD4 complex is subsequently translocated to the nucleus where it modulates the transcription of the TGF-beta-regulated genes. This constitutes the canonical SMAD-dependent TGF-beta signaling cascade. Also involved in non-canonical, SMAD-independent TGF-beta signaling pathways. For instance, TGFBR1 induces TRAF6 autoubiquitination which in turn results in MAP3K7 ubiquitination and activation to trigger apoptosis. Also regulates epithelial to mesenchymal transition through a SMAD-independent signaling pathway through PARD6A phosphorylation and activation. The protein is TGF-beta receptor type-1 (TGFBR1) of Homo sapiens (Human).